The following is a 306-amino-acid chain: MKSENNSVPIDHVIKVDNERHIRVWETFPKNQCDKRNNTIVIASGFARRMDHFAGLAEYLSTNGFHVIRYDSLNHVGLSSGEIDQFSMSVGKKSLLTVIDWLKSEHGIDQVGLIASSLSARIAYDIVADVNLSFLITAVGVVNLRNTLEQALKYDYLQMEIDEIPEDLDFDGYNLGSKVFVTDCFENNWDTLDSTINKTKNLNVPFIAFVANDDSWVQQHEVEELMSNINSDKTKIYSLIGSSHDLGENLIVLRNFYQSITKAAIALDSNLVGLVSEIIEPQFEALTIATVNERRLKNKIQSKSLA.

Residues S117, D214, and H244 each act as charge relay system in the active site.

It belongs to the LuxD family.

It participates in lipid metabolism; fatty acid reduction for biolumincescence. Acyl transferase is part of the fatty acid reductase system required for aldehyde biosynthesis; it produces fatty acids for the luminescent reaction. In Photobacterium phosphoreum, this protein is Acyl transferase.